Reading from the N-terminus, the 206-residue chain is Small ribosomal subunit protein uS4 (206 aa).

An S4 RNA-binding domain is found at 96-156 (GRLDNVVYRM…EKAKKQSRVK (61 aa)).

It belongs to the universal ribosomal protein uS4 family. As to quaternary structure, part of the 30S ribosomal subunit. Contacts protein S5. The interaction surface between S4 and S5 is involved in control of translational fidelity.

One of the primary rRNA binding proteins, it binds directly to 16S rRNA where it nucleates assembly of the body of the 30S subunit. Functionally, with S5 and S12 plays an important role in translational accuracy. The polypeptide is Small ribosomal subunit protein uS4 (Yersinia enterocolitica serotype O:8 / biotype 1B (strain NCTC 13174 / 8081)).